A 369-amino-acid polypeptide reads, in one-letter code: Dihydroorotate dehydrogenase (quinone) (369 aa).

FMN-binding positions include 76–80 (AGLDK) and Thr100. Residue Lys80 participates in substrate binding. Residue 125–129 (NRMGF) coordinates substrate. Asn154 and Asn187 together coordinate FMN. Asn187 is a substrate binding site. The Nucleophile role is filled by Ser190. Asn192 serves as a coordination point for substrate. FMN-binding residues include Lys232 and Ser260. Residue 261–262 (NT) participates in substrate binding. Residues Gly282, Gly311, and 332–333 (YS) contribute to the FMN site.

The protein belongs to the dihydroorotate dehydrogenase family. Type 2 subfamily. In terms of assembly, monomer. Requires FMN as cofactor.

The protein resides in the cell membrane. It catalyses the reaction (S)-dihydroorotate + a quinone = orotate + a quinol. Its pathway is pyrimidine metabolism; UMP biosynthesis via de novo pathway; orotate from (S)-dihydroorotate (quinone route): step 1/1. Functionally, catalyzes the conversion of dihydroorotate to orotate with quinone as electron acceptor. This Deinococcus radiodurans (strain ATCC 13939 / DSM 20539 / JCM 16871 / CCUG 27074 / LMG 4051 / NBRC 15346 / NCIMB 9279 / VKM B-1422 / R1) protein is Dihydroorotate dehydrogenase (quinone) (pyrD).